The primary structure comprises 213 residues: MTEPVTQPALVIPQLIVGLGNPEPKYDQTRHNIGFAAVDALARAWNISLAENRKFQGQYGEGTAPGGVKIRLLKPLTYMNRSGQAIQAVTSWYKLSGESVLVIYDDLDLPLGKTRLRLSGSAGGHNGMKSAIAHLSTQNFPRLRIGIGKPKNAVNGDNSETVSHVLGKFSATETQLMSLVLQFVVECVELSLKQGVEKAMNRCNSYTVEAPKS.

Tyrosine 26 provides a ligand contact to tRNA. Catalysis depends on histidine 31, which acts as the Proton acceptor. Residues tyrosine 78, asparagine 80, and asparagine 126 each contribute to the tRNA site.

It belongs to the PTH family. As to quaternary structure, monomer.

The protein localises to the cytoplasm. It carries out the reaction an N-acyl-L-alpha-aminoacyl-tRNA + H2O = an N-acyl-L-amino acid + a tRNA + H(+). Its function is as follows. Hydrolyzes ribosome-free peptidyl-tRNAs (with 1 or more amino acids incorporated), which drop off the ribosome during protein synthesis, or as a result of ribosome stalling. Functionally, catalyzes the release of premature peptidyl moieties from peptidyl-tRNA molecules trapped in stalled 50S ribosomal subunits, and thus maintains levels of free tRNAs and 50S ribosomes. The sequence is that of Peptidyl-tRNA hydrolase from Trichormus variabilis (strain ATCC 29413 / PCC 7937) (Anabaena variabilis).